Consider the following 587-residue polypeptide: Phosphomethylpyrimidine synthase (587 aa).

Substrate is bound by residues Asn218, Met247, Tyr276, His312, 332 to 334 (SRG), 373 to 376 (DGLR), and Glu412. His416 is a Zn(2+) binding site. Position 439 (Tyr439) interacts with substrate. His480 is a Zn(2+) binding site. Positions 560, 563, and 568 each coordinate [4Fe-4S] cluster.

This sequence belongs to the ThiC family. The cofactor is [4Fe-4S] cluster.

The enzyme catalyses 5-amino-1-(5-phospho-beta-D-ribosyl)imidazole + S-adenosyl-L-methionine = 4-amino-2-methyl-5-(phosphooxymethyl)pyrimidine + CO + 5'-deoxyadenosine + formate + L-methionine + 3 H(+). Its pathway is cofactor biosynthesis; thiamine diphosphate biosynthesis. Catalyzes the synthesis of the hydroxymethylpyrimidine phosphate (HMP-P) moiety of thiamine from aminoimidazole ribotide (AIR) in a radical S-adenosyl-L-methionine (SAM)-dependent reaction. This chain is Phosphomethylpyrimidine synthase, found in Porphyromonas gingivalis (strain ATCC BAA-308 / W83).